The primary structure comprises 349 residues: MTDLRIAVLGVGVMGADHVARITSRISGARVAVVNDHLVEKAEQLAASIPGCSAVADPLDAIADADVDAVVLATPGGTHEEQLLACLDQRKPVMCEKPLTTDVSTSLEIARREADLGRPLIQVGFMRRFDDEYVRLKALLDGGELGNPLMMHCVHRNPGVPAYFDSSLIVKDSLVHEVDITRYLFGEEIASVQIIKPTSNPGAPNGVVDPQIAILRTVSGRHVDVELFVTTGVAYEVRTEVVGEHGSAIIGLDVGLIRKKGPGSWGGTLTPGFRERFGPAYDTEIQRWVDAVHSGTNVCGPTAWDGYAAAAVCAAGVESLETGLPVDVQLADEVTSPSPQGVRESDGCR.

Belongs to the Gfo/Idh/MocA family. As to quaternary structure, homotetramer.

It carries out the reaction myo-inositol + NAD(+) = scyllo-inosose + NADH + H(+). In terms of biological role, involved in the oxidation of myo-inositol (MI) to 2-keto-myo-inositol (2KMI or 2-inosose). The protein is Inositol 2-dehydrogenase of Mycolicibacterium gilvum (strain PYR-GCK) (Mycobacterium gilvum (strain PYR-GCK)).